A 217-amino-acid polypeptide reads, in one-letter code: Ribosomal RNA small subunit methyltransferase G (217 aa).

S-adenosyl-L-methionine is bound by residues glycine 78, phenylalanine 83, 129 to 130, and arginine 146; that span reads GE.

It belongs to the methyltransferase superfamily. RNA methyltransferase RsmG family.

The protein resides in the cytoplasm. It catalyses the reaction guanosine(527) in 16S rRNA + S-adenosyl-L-methionine = N(7)-methylguanosine(527) in 16S rRNA + S-adenosyl-L-homocysteine. Specifically methylates the N7 position of guanine in position 527 of 16S rRNA. The protein is Ribosomal RNA small subunit methyltransferase G of Geobacter sulfurreducens (strain ATCC 51573 / DSM 12127 / PCA).